Consider the following 196-residue polypeptide: Large ribosomal subunit protein uL18 (196 aa).

It belongs to the universal ribosomal protein uL18 family. As to quaternary structure, part of the 50S ribosomal subunit. Contacts the 5S and 23S rRNAs.

This is one of the proteins that bind and probably mediate the attachment of the 5S RNA into the large ribosomal subunit, where it forms part of the central protuberance. In Sulfurisphaera tokodaii (strain DSM 16993 / JCM 10545 / NBRC 100140 / 7) (Sulfolobus tokodaii), this protein is Large ribosomal subunit protein uL18.